The chain runs to 485 residues: Glycogen synthase (485 aa).

Lys-20 serves as a coordination point for ADP-alpha-D-glucose.

The protein belongs to the glycosyltransferase 1 family. Bacterial/plant glycogen synthase subfamily.

It catalyses the reaction [(1-&gt;4)-alpha-D-glucosyl](n) + ADP-alpha-D-glucose = [(1-&gt;4)-alpha-D-glucosyl](n+1) + ADP + H(+). The protein operates within glycan biosynthesis; glycogen biosynthesis. Functionally, synthesizes alpha-1,4-glucan chains using ADP-glucose. The sequence is that of Glycogen synthase from Vibrio vulnificus (strain YJ016).